The following is a 762-amino-acid chain: 1-phosphatidylinositol 4,5-bisphosphate phosphodiesterase delta-4 (762 aa).

Residues 16–124 (LLMQEGMPMR…WMRGLQLLVD (109 aa)) form the PH domain. Positions 26–53 (KVRSKSWKKLRYFRLQNDGMTVWHARQA) are substrate binding. EF-hand domains follow at residues 134-169 (RLDQ…MNVE), 170-205 (MDQE…LTKR), and 206-237 (AEVQ…EQKE). Ca(2+) is bound by residues aspartate 147, asparagine 149, aspartate 151, lysine 153, glutamate 158, aspartate 183, serine 185, serine 187, threonine 189, and glutamate 194. The GBA signature appears at 213–243 (ESFSADGQKLTLLEFLDFLREEQKERDCTSE). Positions 290–435 (QDMTQPLNHY…LRRRILVKGK (146 aa)) constitute a PI-PLC X-box domain. The active site involves histidine 305. Residues asparagine 306, glutamate 335, and aspartate 337 each contribute to the Ca(2+) site. Histidine 350 is an active-site residue. Position 384 (glutamate 384) interacts with Ca(2+). Lysine 433 and lysine 435 together coordinate substrate. Positions 443–471 (LEYEEEEAEPELEESELALESQFETEPEP) are enriched in acidic residues. The segment at 443–483 (LEYEEEEAEPELEESELALESQFETEPEPQEQNLQSKDKKK) is disordered. Residue serine 457 is modified to Phosphoserine. A PI-PLC Y-box domain is found at 493-609 (LSSLVIYLKS…GYVLKPDFLR (117 aa)). Serine 522 and arginine 549 together coordinate substrate. Residues 609-736 (RDIQSSFHPE…QGYRHIHLLS (128 aa)) enclose the C2 domain. Ca(2+) contacts are provided by isoleucine 650, aspartate 652, asparagine 676, aspartate 705, tyrosine 706, and aspartate 707. The short motif at 731–734 (HIHL) is the PDZ-binding element.

In terms of assembly, interacts with GRIP1. Interacts (via GBA motif) with guanine nucleotide-binding protein G(i) alpha subunit GNAI3 (inactive GDP-bound form); low-affinity interaction. The cofactor is Ca(2+).

Its subcellular location is the membrane. It localises to the nucleus. It is found in the cytoplasm. The protein localises to the endoplasmic reticulum. The catalysed reaction is a 1,2-diacyl-sn-glycero-3-phospho-(1D-myo-inositol-4,5-bisphosphate) + H2O = 1D-myo-inositol 1,4,5-trisphosphate + a 1,2-diacyl-sn-glycerol + H(+). It catalyses the reaction a 1,2-diacyl-sn-glycero-3-phospho-(1D-myo-inositol) + H2O = 1D-myo-inositol 1-phosphate + a 1,2-diacyl-sn-glycerol + H(+). Functionally, hydrolyzes the phosphatidylinositol 4,5-bisphosphate (PIP2) to generate 2 second messenger molecules diacylglycerol (DAG) and inositol 1,4,5-trisphosphate (IP3). DAG mediates the activation of protein kinase C (PKC), while IP3 releases Ca(2+) from intracellular stores. Required for acrosome reaction in sperm during fertilization, probably by acting as an important enzyme for intracellular Ca(2+) mobilization in the zona pellucida-induced acrosome reaction. May play a role in cell growth. Modulates the liver regeneration in cooperation with nuclear PKC. Overexpression up-regulates the Erk signaling pathway and proliferation. The chain is 1-phosphatidylinositol 4,5-bisphosphate phosphodiesterase delta-4 (PLCD4) from Pongo abelii (Sumatran orangutan).